Reading from the N-terminus, the 513-residue chain is ATP synthase subunit alpha (513 aa).

169 to 176 (GDRQTGKT) provides a ligand contact to ATP.

This sequence belongs to the ATPase alpha/beta chains family. F-type ATPases have 2 components, CF(1) - the catalytic core - and CF(0) - the membrane proton channel. CF(1) has five subunits: alpha(3), beta(3), gamma(1), delta(1), epsilon(1). CF(0) has three main subunits: a(1), b(2) and c(9-12). The alpha and beta chains form an alternating ring which encloses part of the gamma chain. CF(1) is attached to CF(0) by a central stalk formed by the gamma and epsilon chains, while a peripheral stalk is formed by the delta and b chains.

The protein localises to the cell inner membrane. The enzyme catalyses ATP + H2O + 4 H(+)(in) = ADP + phosphate + 5 H(+)(out). Functionally, produces ATP from ADP in the presence of a proton gradient across the membrane. The alpha chain is a regulatory subunit. The sequence is that of ATP synthase subunit alpha from Idiomarina loihiensis (strain ATCC BAA-735 / DSM 15497 / L2-TR).